The primary structure comprises 182 residues: Adenine phosphoribosyltransferase (182 aa).

The protein belongs to the purine/pyrimidine phosphoribosyltransferase family. In terms of assembly, homodimer.

The protein localises to the cytoplasm. It catalyses the reaction AMP + diphosphate = 5-phospho-alpha-D-ribose 1-diphosphate + adenine. It functions in the pathway purine metabolism; AMP biosynthesis via salvage pathway; AMP from adenine: step 1/1. Its function is as follows. Catalyzes a salvage reaction resulting in the formation of AMP, that is energically less costly than de novo synthesis. The polypeptide is Adenine phosphoribosyltransferase (Koribacter versatilis (strain Ellin345)).